Reading from the N-terminus, the 304-residue chain is tRNA dimethylallyltransferase (304 aa).

10 to 17 (GPTASGKS) provides a ligand contact to ATP. A substrate-binding site is contributed by 12–17 (TASGKS). Residues 35 to 38 (DSRQ) form an interaction with substrate tRNA region.

This sequence belongs to the IPP transferase family. Monomer. Mg(2+) serves as cofactor.

It catalyses the reaction adenosine(37) in tRNA + dimethylallyl diphosphate = N(6)-dimethylallyladenosine(37) in tRNA + diphosphate. Its function is as follows. Catalyzes the transfer of a dimethylallyl group onto the adenine at position 37 in tRNAs that read codons beginning with uridine, leading to the formation of N6-(dimethylallyl)adenosine (i(6)A). This chain is tRNA dimethylallyltransferase, found in Gloeothece citriformis (strain PCC 7424) (Cyanothece sp. (strain PCC 7424)).